A 103-amino-acid chain; its full sequence is Ghrelin (103 aa).

The signal sequence occupies residues 1 to 26 (MPLRRRASHMFVLLCALSLCVESVKG). A disordered region spans residues 27-51 (GTSFLSPAQKPQGRRPPRMGRRDVA). Ser-29 is lipidated: O-decanoyl serine; alternate. Ser-29 carries O-hexanoyl serine; alternate lipidation. Residue Ser-29 is the site of O-octanoyl serine; alternate attachment. Gln-38 carries the glutamine amide modification. At Met-45 the chain carries Methionine amide. Positions 49 to 103 (DVAEPEIPVIKEDDQFMMSAPFELSVSLSEAEYEKYGPVLQKVLVNLLGDSPLEF) are cleaved as a propeptide — removed in mature form.

The protein belongs to the motilin family. Post-translationally, O-octanoylated by GOAT/MBOAT4. O-octanoylation or O-decanoylation is essential for activity. The O-decanoylated form differs in the length of the carbon backbone of the carboxylic acid forming an ester bond with Ser-29. Expressed in the telencephalon, hypothalamus, pituitary, intestine, liver, spleen and gill, with expression strongest in the intestine.

Its subcellular location is the secreted. Functionally, ligand for growth hormone secretagogue receptor type 1 (GHSR). Induces the release of growth hormone from the pituitary. Induces adiposity and stimulates gastric acid secretion. Involved in growth regulation. Has an appetite-stimulating effect. The chain is Ghrelin (ghrl) from Carassius auratus (Goldfish).